Consider the following 360-residue polypeptide: N5-carboxyaminoimidazole ribonucleotide synthase (360 aa).

ATP-binding positions include R98, K138, 143–149 (GYDGKGQ), 173–176 (EGFV), E181, H204, and 255–256 (NE). Residues 102–285 (KSMFKDLGIP…QFENHLRAVA (184 aa)) form the ATP-grasp domain.

Belongs to the PurK/PurT family. As to quaternary structure, homodimer.

It carries out the reaction 5-amino-1-(5-phospho-beta-D-ribosyl)imidazole + hydrogencarbonate + ATP = 5-carboxyamino-1-(5-phospho-D-ribosyl)imidazole + ADP + phosphate + 2 H(+). Its pathway is purine metabolism; IMP biosynthesis via de novo pathway; 5-amino-1-(5-phospho-D-ribosyl)imidazole-4-carboxylate from 5-amino-1-(5-phospho-D-ribosyl)imidazole (N5-CAIR route): step 1/2. Catalyzes the ATP-dependent conversion of 5-aminoimidazole ribonucleotide (AIR) and HCO(3)(-) to N5-carboxyaminoimidazole ribonucleotide (N5-CAIR). The protein is N5-carboxyaminoimidazole ribonucleotide synthase of Pseudomonas aeruginosa (strain ATCC 15692 / DSM 22644 / CIP 104116 / JCM 14847 / LMG 12228 / 1C / PRS 101 / PAO1).